A 102-amino-acid chain; its full sequence is Small ribosomal subunit protein uS10 (102 aa).

It belongs to the universal ribosomal protein uS10 family. As to quaternary structure, part of the 30S ribosomal subunit.

In terms of biological role, involved in the binding of tRNA to the ribosomes. The polypeptide is Small ribosomal subunit protein uS10 (Sulfurisphaera tokodaii (strain DSM 16993 / JCM 10545 / NBRC 100140 / 7) (Sulfolobus tokodaii)).